Consider the following 165-residue polypeptide: 6,7-dimethyl-8-ribityllumazine synthase (165 aa).

5-amino-6-(D-ribitylamino)uracil is bound by residues Y30, 61–63 (ALE), and 90–92 (VVI). 95 to 96 (ET) serves as a coordination point for (2S)-2-hydroxy-3-oxobutyl phosphate. The active-site Proton donor is H98. Residue N123 coordinates 5-amino-6-(D-ribitylamino)uracil. A (2S)-2-hydroxy-3-oxobutyl phosphate-binding site is contributed by R137.

The protein belongs to the DMRL synthase family.

It carries out the reaction (2S)-2-hydroxy-3-oxobutyl phosphate + 5-amino-6-(D-ribitylamino)uracil = 6,7-dimethyl-8-(1-D-ribityl)lumazine + phosphate + 2 H2O + H(+). It participates in cofactor biosynthesis; riboflavin biosynthesis; riboflavin from 2-hydroxy-3-oxobutyl phosphate and 5-amino-6-(D-ribitylamino)uracil: step 1/2. Catalyzes the formation of 6,7-dimethyl-8-ribityllumazine by condensation of 5-amino-6-(D-ribitylamino)uracil with 3,4-dihydroxy-2-butanone 4-phosphate. This is the penultimate step in the biosynthesis of riboflavin. This is 6,7-dimethyl-8-ribityllumazine synthase from Xanthobacter autotrophicus (strain ATCC BAA-1158 / Py2).